The sequence spans 443 residues: MDPLNLSWYDDDLESQNWSRPFNGSEGKPGKPHYNYYAMLLTLLIFIIVFGNVLVCMAVSREKALQTTTNYLIVSLAVADLLVATLVMPWVVYLEVVGEWKFSRIHCDIFVTLDVMMCTASILNLCAISIDRYTAVAMPMLYNTRYSSKRRVTVMIAIVWVLSFTISCPLLFGLNNTDQNECIIANPAFVVYSSIVSFYVPFIVTLLVYIKIYIVLRRRRKRVNTERSSRAFRANLKAPLKGNCTHPEDMKLCTVIMKSNGSFPVNRRRVEAARRAQELEMEMLSSTSPPERTRYSPIPPSHHQLTLPDPSHHGLHSTADSPAKPEKNGHAKDHPKIAKIFEIQSMPNGKTRTSLKTMSRRKLSQQKEKKATQMLAIVLGVFIICWLPFFITHILNIHCECNIPPVLYSAFTWLGYVNSAVNPIIYTTFNIEFRKAFLKILHC.

The Extracellular portion of the chain corresponds to 1-37 (MDPLNLSWYDDDLESQNWSRPFNGSEGKPGKPHYNYY). Residues N5, N17, and N23 are each glycosylated (N-linked (GlcNAc...) asparagine). A helical membrane pass occupies residues 38–60 (AMLLTLLIFIIVFGNVLVCMAVS). Over 61–70 (REKALQTTTN) the chain is Cytoplasmic. Residues 71–93 (YLIVSLAVADLLVATLVMPWVVY) traverse the membrane as a helical segment. Residues 94 to 108 (LEVVGEWKFSRIHCD) are Extracellular-facing. The cysteines at positions 107 and 182 are disulfide-linked. Residues 109-130 (IFVTLDVMMCTASILNLCAISI) form a helical membrane-spanning segment. Residues 131-151 (DRYTAVAMPMLYNTRYSSKRR) lie on the Cytoplasmic side of the membrane. The chain crosses the membrane as a helical span at residues 152–172 (VTVMIAIVWVLSFTISCPLLF). Residues 173–188 (GLNNTDQNECIIANPA) lie on the Extracellular side of the membrane. A helical transmembrane segment spans residues 189-213 (FVVYSSIVSFYVPFIVTLLVYIKIY). An interaction with PPP1R9B region spans residues 211–373 (KIYIVLRRRR…SQQKEKKATQ (163 aa)). The Cytoplasmic segment spans residues 214-373 (IVLRRRRKRV…SQQKEKKATQ (160 aa)). The disordered stretch occupies residues 282-332 (EMLSSTSPPERTRYSPIPPSHHQLTLPDPSHHGLHSTADSPAKPEKNGHAK). Over residues 323-332 (AKPEKNGHAK) the composition is skewed to basic and acidic residues. Residues 374 to 395 (MLAIVLGVFIICWLPFFITHIL) traverse the membrane as a helical segment. The Extracellular segment spans residues 396 to 409 (NIHCECNIPPVLYS). Residues C399 and C401 are joined by a disulfide bond. The helical transmembrane segment at 410–431 (AFTWLGYVNSAVNPIIYTTFNI) threads the bilayer. The Cytoplasmic segment spans residues 432 to 443 (EFRKAFLKILHC). C443 is lipidated: S-palmitoyl cysteine.

The protein belongs to the G-protein coupled receptor 1 family. In terms of assembly, forms homo- and heterooligomers with DRD4. The interaction with DRD4 may modulate agonist-induced downstream signaling. Interacts with CADPS and CADPS2. Interacts with GPRASP1, PPP1R9B and CLIC6. Interacts with ARRB2. Interacts with HTR2A. Interacts with DRD1. Interacts with KCNA2. Post-translationally, palmitoylated. Palmitoylation which is required for proper localization to the plasma membrane and stability of the receptor could be carried on by ZDHHC4, ZDHHC3 and ZDHHC8.

It localises to the cell membrane. The protein resides in the golgi apparatus membrane. In terms of biological role, dopamine receptor whose activity is mediated by G proteins which inhibit adenylyl cyclase. Positively regulates postnatal regression of retinal hyaloid vessels via suppression of VEGFR2/KDR activity, downstream of OPN5. In Canis lupus familiaris (Dog), this protein is D(2) dopamine receptor (DRD2).